The sequence spans 160 residues: MIKKIYLAGGCFWGIEQYYNLNQKIISTNVGYLNSKIDNPTYKDVCNNITDAVEAVELTYDDQVISLNEIIDLLFKVIDPTSINKQGNDIGRQYRTGIYSRDSNELMAIQEKINELQNNYSKLIQTEVMLVDNYYLAEEYHQKYLEKNPNGYCHINLKAK.

C11 is an active-site residue.

Belongs to the MsrA Met sulfoxide reductase family.

The enzyme catalyses L-methionyl-[protein] + [thioredoxin]-disulfide + H2O = L-methionyl-(S)-S-oxide-[protein] + [thioredoxin]-dithiol. It catalyses the reaction [thioredoxin]-disulfide + L-methionine + H2O = L-methionine (S)-S-oxide + [thioredoxin]-dithiol. In terms of biological role, has an important function as a repair enzyme for proteins that have been inactivated by oxidation. Catalyzes the reversible oxidation-reduction of methionine sulfoxide in proteins to methionine. This Malacoplasma penetrans (strain HF-2) (Mycoplasma penetrans) protein is Peptide methionine sulfoxide reductase MsrA.